The chain runs to 445 residues: Trigger factor (445 aa).

The PPIase FKBP-type domain maps to 162–247; the sequence is GDQVTIDAIG…IKAVHTAEPT (86 aa).

This sequence belongs to the FKBP-type PPIase family. Tig subfamily.

The protein resides in the cytoplasm. The enzyme catalyses [protein]-peptidylproline (omega=180) = [protein]-peptidylproline (omega=0). Involved in protein export. Acts as a chaperone by maintaining the newly synthesized protein in an open conformation. Functions as a peptidyl-prolyl cis-trans isomerase. This Rickettsia rickettsii (strain Sheila Smith) protein is Trigger factor.